The chain runs to 225 residues: Putative elongation factor 1 gamma homolog (225 aa).

The GST C-terminal domain occupies 94–225 (DFKTRADILR…MCETEMQPIK (132 aa)).

The polypeptide is Putative elongation factor 1 gamma homolog (Saccharomyces cerevisiae (strain ATCC 204508 / S288c) (Baker's yeast)).